Consider the following 213-residue polypeptide: Uridine kinase (213 aa).

15–22 (GASASGKS) contributes to the ATP binding site.

The protein belongs to the uridine kinase family.

The protein localises to the cytoplasm. The catalysed reaction is uridine + ATP = UMP + ADP + H(+). The enzyme catalyses cytidine + ATP = CMP + ADP + H(+). Its pathway is pyrimidine metabolism; CTP biosynthesis via salvage pathway; CTP from cytidine: step 1/3. The protein operates within pyrimidine metabolism; UMP biosynthesis via salvage pathway; UMP from uridine: step 1/1. In Yersinia enterocolitica serotype O:8 / biotype 1B (strain NCTC 13174 / 8081), this protein is Uridine kinase.